Here is a 156-residue protein sequence, read N- to C-terminus: Lipoprotein signal peptidase (156 aa).

A run of 3 helical transmembrane segments spans residues 37 to 57, 68 to 88, and 95 to 115; these read VIPGFFNLVHVVNKGAAFGFL, FFVVVTIIALGAIGMLLKSAE, and ILGLGFVLGGAIGNLIDRILY. Catalysis depends on residues Asp-120 and Asp-138. Residues 133-153 form a helical membrane-spanning segment; sequence AFNVADIAICLGAFAMIVSFY.

It belongs to the peptidase A8 family.

It localises to the cell inner membrane. It catalyses the reaction Release of signal peptides from bacterial membrane prolipoproteins. Hydrolyzes -Xaa-Yaa-Zaa-|-(S,diacylglyceryl)Cys-, in which Xaa is hydrophobic (preferably Leu), and Yaa (Ala or Ser) and Zaa (Gly or Ala) have small, neutral side chains.. It participates in protein modification; lipoprotein biosynthesis (signal peptide cleavage). This protein specifically catalyzes the removal of signal peptides from prolipoproteins. This is Lipoprotein signal peptidase from Maridesulfovibrio salexigens (strain ATCC 14822 / DSM 2638 / NCIMB 8403 / VKM B-1763) (Desulfovibrio salexigens).